A 116-amino-acid polypeptide reads, in one-letter code: Large ribosomal subunit protein bL20c (116 aa).

It belongs to the bacterial ribosomal protein bL20 family.

The protein resides in the plastid. Its subcellular location is the chloroplast. Its function is as follows. Binds directly to 23S ribosomal RNA and is necessary for the in vitro assembly process of the 50S ribosomal subunit. It is not involved in the protein synthesizing functions of that subunit. In Rhodomonas salina (Cryptomonas salina), this protein is Large ribosomal subunit protein bL20c.